A 284-amino-acid polypeptide reads, in one-letter code: Zinc finger protein ZAT3 (284 aa).

Over residues 1–12 (MNNNHSYDDRSF) the composition is skewed to basic and acidic residues. Positions 1-76 (MNNNHSYDDR…KPDPNAPKIT (76 aa)) are disordered. A compositionally biased stretch (polar residues) spans 18–37 (PSNTSNPNPNLQFALSSSYD). The segment covering 47-62 (TVASSSSSSPKSASKP) has biased composition (low complexity). 3 C2H2-type zinc fingers span residues 77–99 (RPCTECGRKFWSWKALFGHMRCH), 162–184 (FECGGCKKVFGSHQALGGHRASH), and 222–244 (HKCNICFRVFSSGQALGGHMRCH).

Interacts (via the EAR motif) with TPL. In terms of tissue distribution, expressed exclusively in pollen.

Its subcellular location is the nucleus. In terms of biological role, mediates the regulation of male germ cell division by DUO1. The chain is Zinc finger protein ZAT3 from Arabidopsis thaliana (Mouse-ear cress).